The following is an 864-amino-acid chain: Protein 4.1 (864 aa).

Composition is skewed to polar residues over residues 1-16 and 27-41; these read MTTE…NSQH and NSGQ…SCQT. Disordered stretches follow at residues 1 to 122, 136 to 170, and 182 to 202; these read MTTE…GTSL, EPEL…DFEI, and IEVK…ASQK. At Ser-14 the chain carries Phosphoserine. The residue at position 60 (Thr-60) is a Phosphothreonine; by CDK1. The span at 61–75 shows a compositional bias: basic and acidic residues; sequence PTHEDLTKNKERTSE. Positions 76–87 are enriched in low complexity; that stretch reads SRGLSRLFSSFL. Phosphoserine occurs at positions 84, 85, 95, 104, 121, 149, 151, 152, 188, and 191. Over residues 101 to 117 the composition is skewed to basic and acidic residues; sequence EVESDKEKGEGGQKEIE. Positions 149–158 are enriched in polar residues; the sequence is SLSSAETQPA. The span at 182 to 199 shows a compositional bias: basic and acidic residues; it reads IEVKEESPQSKAETELKA. In terms of domain architecture, FERM spans 210-491; sequence MHCKVSLLDD…EHHTFFRLTS (282 aa). Residue Tyr-222 is modified to Phosphotyrosine. A Phosphothreonine modification is found at Thr-378. A hydrophilic region spans residues 494-614; the sequence is TIPKSKFLAL…QAEPEPTEAW (121 aa). Disordered regions lie at residues 518-572 and 586-611; these read RQAS…VAEG and KAQK…PEPT. Residues Ser-521, Ser-540, Ser-542, and Ser-555 each carry the phosphoserine modification. Over residues 587-600 the composition is skewed to basic and acidic residues; the sequence is AQKETVKAEVKKED. The span at 601 to 610 shows a compositional bias: acidic residues; sequence EPPEQAEPEP. The tract at residues 615-713 is spectrin--actin-binding; sequence KVEKTHIEVT…WDKRLSTHSP (99 aa). Tyr-660 is modified (phosphotyrosine; by EGFR). Residues Ser-664, Ser-674, Ser-684, and Ser-709 each carry the phosphoserine modification. A Phosphoserine; by CDK1 modification is found at Ser-712. Positions 714–864 are C-terminal (CTD); the sequence is FRTLNINGQI…VHQETEIADE (151 aa). Phosphothreonine is present on residues Thr-736 and Thr-859.

Binds with a high affinity to glycophorin and with lower affinity to band III protein. Associates with the nuclear mitotic apparatus. Interacts with calmodulin. Interacts with CPAP. Interacts with DLG1. Also found to associate with contractile apparatus and tight junctions. Interacts with NUMA1; this interaction is negatively regulated by CDK1 during metaphase and promotes anaphase-specific localization of NUMA1 in symmetrically dividing cells. Interacts with ATP2B1; regulates small intestinal calcium absorption through regulation of membrane expression of ATP2B1. Post-translationally, phosphorylated at multiple sites by different protein kinases and each phosphorylation event selectively modulates the protein's functions. In terms of processing, phosphorylation on Tyr-660 reduces the ability of 4.1 to promote the assembly of the spectrin/actin/4.1 ternary complex. O-glycosylated; contains N-acetylglucosamine side chains in the C-terminal domain.

The protein resides in the cytoplasm. It localises to the cytoskeleton. The protein localises to the cell cortex. It is found in the nucleus. Protein 4.1 is a major structural element of the erythrocyte membrane skeleton. It plays a key role in regulating membrane physical properties of mechanical stability and deformability by stabilizing spectrin-actin interaction. Recruits DLG1 to membranes. Required for dynein-dynactin complex and NUMA1 recruitment at the mitotic cell cortex during anaphase. This Homo sapiens (Human) protein is Protein 4.1.